We begin with the raw amino-acid sequence, 432 residues long: Trigger factor (432 aa).

The 86-residue stretch at 161-246 (DDRVTIDFVG…LKKVENMVLP (86 aa)) folds into the PPIase FKBP-type domain.

It belongs to the FKBP-type PPIase family. Tig subfamily.

Its subcellular location is the cytoplasm. The catalysed reaction is [protein]-peptidylproline (omega=180) = [protein]-peptidylproline (omega=0). Functionally, involved in protein export. Acts as a chaperone by maintaining the newly synthesized protein in an open conformation. Functions as a peptidyl-prolyl cis-trans isomerase. This chain is Trigger factor, found in Haemophilus influenzae (strain PittGG).